Here is a 196-residue protein sequence, read N- to C-terminus: DNA polymerase epsilon subunit D (196 aa).

Positions arginine 125–threonine 196 are disordered. The segment covering glycine 133–methionine 143 has biased composition (acidic residues). Positions glycine 144–aspartate 159 are enriched in basic and acidic residues. The segment covering glutamate 160–glutamate 173 has biased composition (acidic residues). Residues serine 174–threonine 188 show a composition bias toward basic and acidic residues. Phosphoserine; by ATM or ATR is present on serine 183.

DNA polymerase epsilon is a heterotetramer consisting of POL2, DPB2, DPB3 and DPB4. Component of the ISW2 complex, which at least consists of ISW2, ITC1, DLS1 and DPB4.

It is found in the nucleus. Its function is as follows. As accessory component of the DNA polymerase epsilon (DNA polymerase II) participates in chromosomal DNA replication. It is required during synthesis of the leading and lagging DNA strands at the replication fork and binds at/or near replication origins and moves along DNA with the replication fork. It has 3'-5' proofreading exonuclease activity that correct errors arising during DNA replication. It is also involved in DNA synthesis during DNA repair. Also functions as a component of the ISW2 complex, which acts in remodeling the chromatin by catalyzing an ATP-dependent alteration in the structure of nucleosomal DNA. The ISW2 complex is involved in coordinating transcriptional repression and in inheritance of telomeric silencing. It is involved in repression of MAT a-specific genes, INO1, and early meiotic genes during mitotic growth dependent upon transcription factor UME6 and in a parallel pathway to the RPD3-SIN3 histone deacetylase complex. The polypeptide is DNA polymerase epsilon subunit D (DPB4) (Saccharomyces cerevisiae (strain ATCC 204508 / S288c) (Baker's yeast)).